The following is a 520-amino-acid chain: Serine protease Hip1 (520 aa).

The first 30 residues, 1–30 (MGMRLSRRDKIARMLLIWAALAAVALVLVG), serve as a signal peptide directing secretion. C31 carries the N-palmitoyl cysteine lipid modification. C31 carries the S-diacylglycerol cysteine lipid modification. An AB hydrolase-1 domain is found at 102–497 (GSLVINPGGP…TQHTVVFQGD (396 aa)). Residue S228 is the Nucleophile of the active site. D463 is a catalytic residue. The Proton donor role is filled by H490.

This sequence belongs to the peptidase S33 family.

It localises to the cell envelope. It is found in the cell membrane. Functionally, serine protease that promotes pathogenesis by promoting the processing and the extracellular release of the M.bovis heat-shock protein GroEL2. Its function is as follows. Key immunomodulatory virulence factor, which promotes survival in host macrophages and modulates host immune responses. The chain is Serine protease Hip1 from Mycobacterium bovis (strain ATCC BAA-935 / AF2122/97).